The following is a 220-amino-acid chain: Deoxyribose-phosphate aldolase (220 aa).

The active-site Proton donor/acceptor is the Asp89. The Schiff-base intermediate with acetaldehyde role is filled by Lys151. Catalysis depends on Lys180, which acts as the Proton donor/acceptor.

This sequence belongs to the DeoC/FbaB aldolase family. DeoC type 1 subfamily.

It localises to the cytoplasm. It carries out the reaction 2-deoxy-D-ribose 5-phosphate = D-glyceraldehyde 3-phosphate + acetaldehyde. It functions in the pathway carbohydrate degradation; 2-deoxy-D-ribose 1-phosphate degradation; D-glyceraldehyde 3-phosphate and acetaldehyde from 2-deoxy-alpha-D-ribose 1-phosphate: step 2/2. Its function is as follows. Catalyzes a reversible aldol reaction between acetaldehyde and D-glyceraldehyde 3-phosphate to generate 2-deoxy-D-ribose 5-phosphate. This Streptococcus pneumoniae serotype 4 (strain ATCC BAA-334 / TIGR4) protein is Deoxyribose-phosphate aldolase.